A 305-amino-acid polypeptide reads, in one-letter code: Putative beta-lactamase HcpD (305 aa).

The signal sequence occupies residues 1 to 27; that stretch reads MIKSWTKKWFLILFLMASCFGHLVATT. TPR repeat units follow at residues 28–61, 96–133, 168–205, and 240–277; these read GEKY…RMGV, HLAC…KGGV, GISC…KDGA, and GSGC…GFSG. Disulfide bonds link Cys55–Cys63, Cys91–Cys99, Cys127–Cys135, Cys163–Cys171, Cys199–Cys207, Cys235–Cys243, and Cys271–Cys279.

It belongs to the hcp beta-lactamase family.

It localises to the secreted. It catalyses the reaction a beta-lactam + H2O = a substituted beta-amino acid. Functionally, may hydrolyze 6-aminopenicillinic acid and 7-aminocephalosporanic acid (ACA) derivatives. Binds to penicillin. The sequence is that of Putative beta-lactamase HcpD (hcpD) from Helicobacter pylori (strain J99 / ATCC 700824) (Campylobacter pylori J99).